Consider the following 108-residue polypeptide: ATP synthase peripheral stalk subunit F6, mitochondrial (108 aa).

A mitochondrion-targeting transit peptide spans 1 to 32; the sequence is MILQRLFRLSSAVQSAISVSWRRNIGITAVAF. N6-acetyllysine occurs at positions 41, 46, and 79. N6-acetyllysine; alternate is present on residues Lys84 and Lys99. 2 positions are modified to N6-succinyllysine; alternate: Lys84 and Lys99. Lys105 bears the N6-acetyllysine mark. The residue at position 108 (Ser108) is a Phosphoserine.

The protein belongs to the eukaryotic ATPase subunit F6 family. In terms of assembly, component of the ATP synthase complex composed at least of ATP5F1A/subunit alpha, ATP5F1B/subunit beta, ATP5MC1/subunit c (homooctomer), MT-ATP6/subunit a, MT-ATP8/subunit 8, ATP5ME/subunit e, ATP5MF/subunit f, ATP5MG/subunit g, ATP5MK/subunit k, ATP5MJ/subunit j, ATP5F1C/subunit gamma, ATP5F1D/subunit delta, ATP5F1E/subunit epsilon, ATP5PF/subunit F6, ATP5PB/subunit b, ATP5PD/subunit d, ATP5PO/subunit OSCP. ATP synthase complex consists of a soluble F(1) head domain (subunits alpha(3) and beta(3)) - the catalytic core - and a membrane F(0) domain - the membrane proton channel (subunits c, a, 8, e, f, g, k and j). These two domains are linked by a central stalk (subunits gamma, delta, and epsilon) rotating inside the F1 region and a stationary peripheral stalk (subunits F6, b, d, and OSCP).

Its subcellular location is the mitochondrion. It is found in the mitochondrion inner membrane. In terms of biological role, subunit F6, of the mitochondrial membrane ATP synthase complex (F(1)F(0) ATP synthase or Complex V) that produces ATP from ADP in the presence of a proton gradient across the membrane which is generated by electron transport complexes of the respiratory chain. ATP synthase complex consist of a soluble F(1) head domain - the catalytic core - and a membrane F(1) domain - the membrane proton channel. These two domains are linked by a central stalk rotating inside the F(1) region and a stationary peripheral stalk. During catalysis, ATP synthesis in the catalytic domain of F(1) is coupled via a rotary mechanism of the central stalk subunits to proton translocation. In vivo, can only synthesize ATP although its ATP hydrolase activity can be activated artificially in vitro. Part of the complex F(0) domain. Part of the complex F(0) domain and the peripheric stalk, which acts as a stator to hold the catalytic alpha(3)beta(3) subcomplex and subunit a/ATP6 static relative to the rotary elements. The chain is ATP synthase peripheral stalk subunit F6, mitochondrial from Bos taurus (Bovine).